The sequence spans 79 residues: Small ribosomal subunit protein bS18 (79 aa).

This sequence belongs to the bacterial ribosomal protein bS18 family. As to quaternary structure, part of the 30S ribosomal subunit. Forms a tight heterodimer with protein bS6.

Functionally, binds as a heterodimer with protein bS6 to the central domain of the 16S rRNA, where it helps stabilize the platform of the 30S subunit. This Rhodopseudomonas palustris (strain BisB5) protein is Small ribosomal subunit protein bS18.